The sequence spans 745 residues: Capsid protein (745 aa).

Disordered stretches follow at residues 23-44 (RRPL…RRTV), 598-619 (PCKT…QVAD), and 660-700 (QPKR…EQAT). Composition is skewed to basic and acidic residues over residues 599-612 (CKTD…DRHP) and 675-691 (GEFR…EERS).

It belongs to the anelloviridae capsid protein family.

The protein resides in the virion. Its function is as follows. Self assemble to form an icosahedral capsid. The sequence is that of Capsid protein from Homo sapiens (Human).